Here is a 487-residue protein sequence, read N- to C-terminus: b(0,+)-type amino acid transporter 1 (487 aa).

A compositionally biased stretch (basic and acidic residues) spans 1–20 (MEETSPRRRREDEKSVHSTE). A disordered region spans residues 1 to 23 (MEETSPRRRREDEKSVHSTEPKT). The Cytoplasmic portion of the chain corresponds to 1–31 (MEETSPRRRREDEKSVHSTEPKTTSLQKEVG). Ser18 carries the phosphoserine modification. The chain crosses the membrane as a helical span at residues 32-55 (LLSGICIIVGTIIGSGIFISPKSV). 43–47 (IIGSG) lines the L-arginine pocket. Residues 56–62 (LANTESV) are Extracellular-facing. Residues 63 to 84 (GPCLIIWAACGVLATLGALCFA) traverse the membrane as a helical segment. Topologically, residues 85–110 (ELGTMITKSGGEYPYLMEAFGPIPAY) are cytoplasmic. Residues 111-137 (LFSWTSLIVMKPSSFAIICLSFSEYVC) form a helical membrane-spanning segment. At 138-147 (AAFYLGCRPP) the chain is on the extracellular side. 2 consecutive transmembrane segments (helical) span residues 148 to 169 (AVVV…NALS) and 170 to 193 (VRLG…IIII). At 194–217 (SGLVLLAQGNVKNFQNSFEGSQTS) the chain is on the extracellular side. The chain crosses the membrane as a helical span at residues 218 to 238 (VGSISLAFYNGLWAYDGWNQL). Asp233 lines the L-arginine pocket. Residues 239-251 (NYITEELRNPYRN) lie on the Cytoplasmic side of the membrane. Residues 252–274 (LPMAIVIGIPLVTVCYILMNIAY) traverse the membrane as a helical segment. Over 275-302 (FTVMTPTELLQSQAVAVTFGDRVLYPAS) the chain is Extracellular. A helical transmembrane segment spans residues 303-325 (WVVPLFVAFSTIGAANGTCFTAG). Residues 326-351 (RLIYVAGREGHMLKVLSYISVKRLTP) are Cytoplasmic-facing. 2 helical membrane-spanning segments follow: residues 352–370 (APAL…IPGD) and 371–391 (INSL…MTIL). Residues 392–410 (GLVVMRFTRKDLERPIKVP) lie on the Cytoplasmic side of the membrane. A helical transmembrane segment spans residues 411 to 431 (IFIPIIVILVSVFLILAPIIS). The Extracellular portion of the chain corresponds to 432–434 (SPA). A helical transmembrane segment spans residues 435-450 (WEYLYCVLFILSGLIF). Over 451–487 (YFLFVHYKFRWAQKISRPITKHLQMLMEVVPPEKDPE) the chain is Cytoplasmic.

Belongs to the amino acid-polyamine-organocation (APC) superfamily. As to quaternary structure, disulfide-linked heterodimer composed of the catalytic light chain subunit SLC7A9 and the heavy chain subunit SLC3A1. The heterodimer is the minimal functional unit. Assembles in heterotetramers (dimers of heterodimers) and higher order oligomers; the oligomerization is mediated by SLC3A1 likely to prevent degradation and facilitate heteromer trafficking to the plasma membrane. Interacts with CAV1. Outer medulla of kidney (at protein level). Kidney and small intestine. In the kidney localized to the apical membrane of the proximal tubules.

It is found in the apical cell membrane. The catalysed reaction is L-leucine(out) + L-arginine(in) = L-leucine(in) + L-arginine(out). It carries out the reaction L-histidine(out) + L-arginine(in) = L-histidine(in) + L-arginine(out). The enzyme catalyses L-arginine(in) + L-phenylalanine(out) = L-arginine(out) + L-phenylalanine(in). It catalyses the reaction L-cysteine(out) + L-arginine(in) = L-cysteine(in) + L-arginine(out). The catalysed reaction is L-cystine(out) + L-arginine(in) = L-cystine(in) + L-arginine(out). It carries out the reaction L-lysine(out) + L-arginine(in) = L-lysine(in) + L-arginine(out). Associates with SLC3A1 to form a functional transporter complex that mediates the electrogenic exchange between cationic amino acids and neutral amino acids, with a stoichiometry of 1:1. Has system b(0,+)-like activity with high affinity for extracellular cationic amino acids and L-cystine and lower affinity for intracellular neutral amino acids. Substrate exchange is driven by high concentration of intracellular neutral amino acids and the intracellular reduction of L-cystine to L-cysteine. Required for reabsorption of L-cystine and dibasic amino acids across the brush border membrane in renal proximal tubules. This Rattus norvegicus (Rat) protein is b(0,+)-type amino acid transporter 1 (Slc7a9).